The following is a 136-amino-acid chain: Protein PsiE (136 aa).

The next 4 helical transmembrane spans lie at 15–35 (ILQNVLNLGLLTLGLILVVFL), 55–75 (YELVEGLVIYFLYFEFIALIV), 83–103 (HFPLRYFVYIGITAIVRLIIV), and 108–128 (PMDVLLYPAAILLLVITLWLC).

Belongs to the PsiE family.

The protein resides in the cell inner membrane. The chain is Protein PsiE from Salmonella gallinarum (strain 287/91 / NCTC 13346).